Here is a 96-residue protein sequence, read N- to C-terminus: Large ribosomal subunit protein eL21 (96 aa).

Residues 1 to 22 (MRKSKGFKSRSRYKLKRSIRPK) form a disordered region.

Belongs to the eukaryotic ribosomal protein eL21 family.

The chain is Large ribosomal subunit protein eL21 from Methanosphaera stadtmanae (strain ATCC 43021 / DSM 3091 / JCM 11832 / MCB-3).